The chain runs to 1153 residues: Cytosolic carboxypeptidase 1 (1153 aa).

A disordered region spans residues 357–400 (NQPPGVDDVVDESDENEATEVDTENDTENEEDDTGHKTQNDDIE). Residues 364–389 (DVVDESDENEATEVDTENDTENEEDD) are compositionally biased toward acidic residues. Residues 774-1063 (YPYTYSMLKM…QFCLALLRLR (290 aa)) enclose the Peptidase M14 domain. Zn(2+)-binding residues include His845, Glu848, and His942. Glu1027 functions as the Proton donor/acceptor in the catalytic mechanism. Positions 1108-1128 (AFLEEVDYSAESNDENDPELE) are enriched in acidic residues. Positions 1108–1153 (AFLEEVDYSAESNDENDPELEPDLRDNHALPDPSSDSELSHQDSLT) are disordered. Residues 1141-1153 (SSDSELSHQDSLT) are compositionally biased toward polar residues.

Belongs to the peptidase M14 family. Zn(2+) serves as cofactor.

It localises to the cytoplasm. The protein resides in the cytosol. The protein localises to the nucleus. It is found in the mitochondrion. The catalysed reaction is (L-glutamyl)(n+1)-gamma-L-glutamyl-L-glutamyl-[protein] + H2O = (L-glutamyl)(n)-gamma-L-glutamyl-L-glutamyl-[protein] + L-glutamate. It catalyses the reaction C-terminal L-alpha-aminoacyl-L-glutamyl-L-glutamyl-[tubulin] + H2O = C-terminal L-alpha-aminoacyl-L-glutamyl-[tubulin] + L-glutamate. In terms of biological role, metallocarboxypeptidase that mediates protein deglutamylation of tubulin and non-tubulin target proteins. Catalyzes the removal of polyglutamate side chains present on the gamma-carboxyl group of glutamate residues within the C-terminal tail of alpha- and beta-tubulin. Specifically cleaves tubulin long-side-chains, while it is not able to remove the branching point glutamate. Also catalyzes the removal of polyglutamate residues from the carboxy-terminus of alpha-tubulin as well as non-tubulin proteins. The chain is Cytosolic carboxypeptidase 1 (agtpbp1) from Danio rerio (Zebrafish).